The sequence spans 396 residues: Ornithine aminotransferase (396 aa).

Lys255 bears the N6-(pyridoxal phosphate)lysine mark.

It belongs to the class-III pyridoxal-phosphate-dependent aminotransferase family. OAT subfamily. Pyridoxal 5'-phosphate serves as cofactor.

Its subcellular location is the cytoplasm. It catalyses the reaction a 2-oxocarboxylate + L-ornithine = L-glutamate 5-semialdehyde + an L-alpha-amino acid. It functions in the pathway amino-acid biosynthesis; L-proline biosynthesis; L-glutamate 5-semialdehyde from L-ornithine: step 1/1. Functionally, catalyzes the interconversion of ornithine to glutamate semialdehyde. The chain is Ornithine aminotransferase from Bacillus cereus (strain Q1).